We begin with the raw amino-acid sequence, 449 residues long: Glucose-6-phosphate isomerase (449 aa).

The active-site Proton donor is Glu291. Active-site residues include His312 and Lys426.

Belongs to the GPI family.

It localises to the cytoplasm. It carries out the reaction alpha-D-glucose 6-phosphate = beta-D-fructose 6-phosphate. Its pathway is carbohydrate biosynthesis; gluconeogenesis. The protein operates within carbohydrate degradation; glycolysis; D-glyceraldehyde 3-phosphate and glycerone phosphate from D-glucose: step 2/4. Its function is as follows. Catalyzes the reversible isomerization of glucose-6-phosphate to fructose-6-phosphate. The chain is Glucose-6-phosphate isomerase from Clostridium botulinum (strain Alaska E43 / Type E3).